The primary structure comprises 215 residues: Imidazole glycerol phosphate synthase subunit HisH (215 aa).

The Glutamine amidotransferase type-1 domain maps to 7–215 (TIAVIDYGMG…LLKNFVEWQP (209 aa)). The Nucleophile role is filled by Cys-86. Residues His-195 and Glu-197 contribute to the active site.

As to quaternary structure, heterodimer of HisH and HisF.

It localises to the cytoplasm. The catalysed reaction is 5-[(5-phospho-1-deoxy-D-ribulos-1-ylimino)methylamino]-1-(5-phospho-beta-D-ribosyl)imidazole-4-carboxamide + L-glutamine = D-erythro-1-(imidazol-4-yl)glycerol 3-phosphate + 5-amino-1-(5-phospho-beta-D-ribosyl)imidazole-4-carboxamide + L-glutamate + H(+). It catalyses the reaction L-glutamine + H2O = L-glutamate + NH4(+). It participates in amino-acid biosynthesis; L-histidine biosynthesis; L-histidine from 5-phospho-alpha-D-ribose 1-diphosphate: step 5/9. Functionally, IGPS catalyzes the conversion of PRFAR and glutamine to IGP, AICAR and glutamate. The HisH subunit catalyzes the hydrolysis of glutamine to glutamate and ammonia as part of the synthesis of IGP and AICAR. The resulting ammonia molecule is channeled to the active site of HisF. This chain is Imidazole glycerol phosphate synthase subunit HisH, found in Dechloromonas aromatica (strain RCB).